A 744-amino-acid polypeptide reads, in one-letter code: MAVPPRPLQLLGILFIISLNSVRLIQAGAYYGIKPLPPQIPPQIPPQIPQYQPLGQQVPHMPLGKDGLSMGKEMPHMQYGKEYPHLPQYMKEIPPVPRMGKEVVPKKGKGEVPLASLRGEQGPRGEPGPRGPPGPPGLPGHGMPGIKGKPGPQGYPGIGKPGMPGMPGKPGAMGMPGAKGEIGPKGEIGPMGIPGPQGPPGPHGLPGIGKPGGPGLPGQPGAKGERGPKGPPGPPGLQGPKGEKGFGMPGLPGLKGPPGMHGPPGPVGLPGVGKPGVTGFPGPQGPLGKPGPPGEPGPQGLIGVPGVQGPPGMPGVGKPGQDGIPGQPGFPGGKGEQGLPGLPGPPGLPGVGKPGFPGPKGDRGIGGVPGVLGPRGEKGPIGAPGMGGPPGEPGLPGIPGPMGPPGAIGFPGPKGEGGVVGPQGPPGPKGEPGLQGFPGKPGFLGEVGPPGMRGLPGPIGPKGEGGHKGLPGLPGVPGLLGPKGEPGIPGDQGLQGPPGIPGIVGPSGPIGPPGIPGPKGEPGLPGPPGFPGVGKPGVAGLHGPPGKPGALGPQGQPGLPGPPGPPGPPGPPAVMPTPSPQGEYLPDMGLGIDGVKPPHAYAGKKGKHGGPAYEMPAFTAELTVPFPPVGAPVKFDKLLYNGRQNYNPQTGIFTCEVPGVYYFAYHVHCKGGNVWVALFKNNEPMMYTYDEYKKGFLDQASGSAVLLLRPGDQVFLQMPSEQAAGLYAGQYVHSSFSGYLLYPM.

A signal peptide spans 1-24 (MAVPPRPLQLLGILFIISLNSVRL). The nonhelical region (NC2) stretch occupies residues 29 to 118 (AYYGIKPLPP…KGEVPLASLR (90 aa)). Residues 101–110 (KEVVPKKGKG) are compositionally biased toward basic and acidic residues. Disordered regions lie at residues 101–395 (KEVV…EPGL), 412–439 (GPKGEGGVVGPQGPPGPKGEPGLQGFPG), and 457–590 (GPIG…DMGL). Residues 119–572 (GEQGPRGEPG…PGPPGPPGPP (454 aa)) are triple-helical region (COL1). Positions 129–138 (PRGPPGPPGL) are enriched in pro residues. Residues 169 to 191 (KPGAMGMPGAKGEIGPKGEIGPM) are compositionally biased toward low complexity. Gly residues predominate over residues 204 to 218 (GLPGIGKPGGPGLPG). The span at 298–307 (PQGLIGVPGV) shows a compositional bias: low complexity. Composition is skewed to gly residues over residues 329–338 (GFPGGKGEQG) and 412–421 (GPKGEGGVVG). 2 stretches are compositionally biased toward low complexity: residues 470–507 (LPGLPGVPGLLGPKGEPGIPGDQGLQGPPGIPGIVGPS) and 548–557 (PGALGPQGQP). Positions 559 to 579 (LPGPPGPPGPPGPPAVMPTPS) are enriched in pro residues. The nonhelical region (NC1) stretch occupies residues 573 to 744 (AVMPTPSPQG…SFSGYLLYPM (172 aa)). Residues 611–744 (PAYEMPAFTA…SFSGYLLYPM (134 aa)) enclose the C1q domain.

Homotrimers, or heterotrimers in association with alpha 2(VIII) type collagens. Four homotrimers can form a tetrahedron stabilized by central interacting C-terminal NC1 trimers. Post-translationally, prolines at the third position of the tripeptide repeating unit (G-X-Y) are hydroxylated in some or all of the chains. Proteolytically cleaved by neutrophil elastase, in vitro. Proteolytic processing produces the C-terminal NC1 domain fragment, vastatin. High levels in calvarium, eye and skin of newborn mice; also in various epithelial, endothelial and mesenchymal cells.

Its subcellular location is the secreted. It localises to the extracellular space. It is found in the extracellular matrix. The protein localises to the basement membrane. Its function is as follows. Macromolecular component of the subendothelium. Major component of the Descemet's membrane (basement membrane) of corneal endothelial cells. Also a component of the endothelia of blood vessels. Necessary for migration and proliferation of vascular smooth muscle cells and thus, has a potential role in the maintenance of vessel wall integrity and structure, in particular in atherogenesis. Functionally, vastatin, the C-terminal fragment comprising the NC1 domain, inhibits aortic endothelial cell proliferation and causes cell apoptosis. The protein is Collagen alpha-1(VIII) chain (Col8a1) of Mus musculus (Mouse).